Here is a 247-residue protein sequence, read N- to C-terminus: MHTQVLFEHPLNEKMRTWLRIEFLIQQLSINLPIADHAGALHFFRNISDLLDVFERGEVRTELLKELERQQRKLQAWVEVPGVDQDRIEALRQQLKSAGSVLISAPRIGQQLREDRLIALVRQRLSIPGGCCSFDLPTLHIWLHLQQPQRDAQIETWLASLNPLTQALTLVLDLIRNSAPFRKQTSLNGFYQDNGDDADLLRLILTLDSQLYPQISGHKSRFAIRFMPLDSENGLVPERLDFELACC.

Belongs to the ZapD family. Interacts with FtsZ.

The protein localises to the cytoplasm. Functionally, cell division factor that enhances FtsZ-ring assembly. Directly interacts with FtsZ and promotes bundling of FtsZ protofilaments, with a reduction in FtsZ GTPase activity. This Salmonella arizonae (strain ATCC BAA-731 / CDC346-86 / RSK2980) protein is Cell division protein ZapD.